A 309-amino-acid polypeptide reads, in one-letter code: Porphobilinogen deaminase (309 aa).

Cys-242 is subject to S-(dipyrrolylmethanemethyl)cysteine.

This sequence belongs to the HMBS family. Monomer. Requires dipyrromethane as cofactor.

It catalyses the reaction 4 porphobilinogen + H2O = hydroxymethylbilane + 4 NH4(+). Its pathway is porphyrin-containing compound metabolism; protoporphyrin-IX biosynthesis; coproporphyrinogen-III from 5-aminolevulinate: step 2/4. In terms of biological role, tetrapolymerization of the monopyrrole PBG into the hydroxymethylbilane pre-uroporphyrinogen in several discrete steps. This Pseudoalteromonas atlantica (strain T6c / ATCC BAA-1087) protein is Porphobilinogen deaminase.